The chain runs to 229 residues: Large ribosomal subunit protein uL1 (229 aa).

Belongs to the universal ribosomal protein uL1 family. As to quaternary structure, part of the 50S ribosomal subunit.

Its function is as follows. Binds directly to 23S rRNA. The L1 stalk is quite mobile in the ribosome, and is involved in E site tRNA release. Functionally, protein L1 is also a translational repressor protein, it controls the translation of the L11 operon by binding to its mRNA. The sequence is that of Large ribosomal subunit protein uL1 from Streptococcus pyogenes serotype M3 (strain SSI-1).